The sequence spans 626 residues: Basic helix-loop-helix ARNT-like protein 1 (626 aa).

The tract at residues 1 to 60 is disordered; that stretch reads MADQRMDISSTISDFMSPGPTDLLSSSLGTSGVDCNRKRKGSSTDYQESMDTDKDDPHGR. Residue S17 is modified to Phosphoserine; by GSK3-beta. Positions 17 to 32 are enriched in low complexity; that stretch reads SPGPTDLLSSSLGTSG. T21 carries the phosphothreonine; by GSK3-beta modification. The Nuclear localization signal signature appears at 36–41; sequence NRKRKG. Residues 51-60 show a composition bias toward basic and acidic residues; sequence DTDKDDPHGR. Residues 72-125 enclose the bHLH domain; it reads NAREAHSQIEKRRRDKMNSFIDELASLVPTCNAMSRKLDKLTVLRMAVQHMKTL. The residue at position 78 (S78) is a Phosphoserine. S90 bears the Phosphoserine; by CK2 mark. The Nuclear export signal 1 signature appears at 142-152; that stretch reads LSDDELKHLIL. In terms of domain architecture, PAS 1 spans 143 to 215; that stretch reads SDDELKHLIL…EQLSSSDTAP (73 aa). K252 participates in a covalent cross-link: Glycyl lysine isopeptide (Lys-Gly) (interchain with G-Cter in SUMO2 and SUMO3). K259 participates in a covalent cross-link: Glycyl lysine isopeptide (Lys-Gly) (interchain with G-Cter in SUMO2). The PAS 2 domain maps to 326–396; it reads PQPVNGEIRV…ECHRQVLQTR (71 aa). Residues 361–369 carry the Nuclear export signal 2 motif; it reads LAYLPQELL. In terms of domain architecture, PAC spans 401–444; it reads TNCYKFKIKDGSFITLRSRWFSFMNPWTKEVEYIVSTNTVVLAN. Disordered stretches follow at residues 458–493 and 511–595; these read ASPHSMDSMLPSGEGGPKRTHPTVPGIPGGTRAGAG and GSSP…SPSN. Positions 484–493 are enriched in gly residues; it reads IPGGTRAGAG. The interaction with CIART stretch occupies residues 508–588; that stretch reads RIRGSSPSSC…IGIDMIDNDQ (81 aa). A compositionally biased stretch (low complexity) spans 511–521; that stretch reads GSSPSSCGSSP. The residue at position 538 (K538) is an N6-acetyllysine.

Component of the circadian clock oscillator which includes the CRY1/2 proteins, CLOCK or NPAS2,BMAL1 or BMAL2, CSNK1D and/or CSNK1E, TIMELESS and the PER1/2/3 proteins. Forms a heterodimer with CLOCK. The CLOCK-BMAL1 heterodimer is required for E-box-dependent transactivation, for CLOCK nuclear translocation and degradation, and, for phosphorylation of both CLOCK and BMAL1. Part of a nuclear complex which also includes RACK1 and PRKCA; RACK1 and PRKCA are recruited to the complex in a circadian manner. Interacts with NPAS2. Interacts with EZH2. Interacts with SUMO3. Interacts with SIRT1. Interacts with AHR. Interacts with ID1, ID2 and ID3. Interacts with DDX4. Interacts with OGT. Interacts with EED and SUZ12. Interacts with MTA1. Interacts with CIART. Interacts with HSP90. Interacts with KAT2B and EP300. Interacts with BHLHE40/DEC1 and BHLHE41/DEC2. Interacts with RELB and the interaction is enhanced in the presence of CLOCK. Interacts with PER1, PER2, CRY1 and CRY2 and this interaction requires a translocation to the nucleus. Interaction of the CLOCK-BMAL1 heterodimer with PER or CRY inhibits transcription activation. Interaction of the CLOCK-BMAL1 with CRY1 is independent of DNA but with PER2 is off DNA. The CLOCK-BMAL1 heterodimer interacts with GSK3B. Interacts with KDM5A. Interacts with KMT2A; in a circadian manner. Interacts with UBE3A. Interacts with PRKCG. Interacts with MAGEL2. Interacts with NCOA2. Interacts with THRAP3. The CLOCK-BMAL1 heterodimer interacts with PASD1. Interacts with PASD1. Interacts with USP9X. Interacts with PIWIL2 (via PIWI domain). Interacts with HDAC3. Interacts with HNF4A. Post-translationally, ubiquitinated, leading to its proteasomal degradation. Deubiquitinated by USP9X. In terms of processing, O-glycosylated; contains O-GlcNAc. O-glycosylation by OGT prevents protein degradation by inhibiting ubiquitination. It also stabilizes the CLOCK-BMAL1 heterodimer thereby increasing CLOCK-BMAL1-mediated transcription of genes in the negative loop of the circadian clock such as PER1/2/3 and CRY1/2. Acetylated on Lys-538 by CLOCK during the repression phase of the circadian cycle. Acetylation facilitates recruitment of CRY1 protein and initiates the repression phase of the circadian cycle. Acetylated at Lys-538 by KAT5 during the activation phase of the cycle, leading to recruitment of the positive transcription elongation factor b (P-TEFb) and BRD4, followed by productive elongation of circadian transcripts. Deacetylated by SIRT1, which may result in decreased protein stability. Post-translationally, phosphorylated upon dimerization with CLOCK. Phosphorylation enhances the transcriptional activity, alters the subcellular localization and decreases the stability of the CLOCK-BMAL1 heterodimer by promoting its degradation. Phosphorylation shows circadian variations in the liver with a peak between CT10 to CT14. Phosphorylation at Ser-90 by CK2 is essential for its nuclear localization, its interaction with CLOCK and controls CLOCK nuclear entry. Dephosphorylation at Ser-78 is important for dimerization with CLOCK and transcriptional activity. In terms of processing, sumoylated on Lys-259 upon dimerization with CLOCK. Predominantly conjugated to poly-SUMO2/3 rather than SUMO1 and the level of these conjugates undergo rhythmic variation, peaking at CT9-CT12. Sumoylation localizes it exclusively to the PML body and promotes its ubiquitination in the PML body, ubiquitin-dependent proteasomal degradation and the transcriptional activity of the CLOCK-BMAL1 heterodimer. Undergoes lysosome-mediated degradation in a time-dependent manner in the liver. Hair follicles (at protein level). Highly expressed in the adult brain, skeletal muscle and heart.

The protein localises to the nucleus. It is found in the cytoplasm. The protein resides in the PML body. With respect to regulation, there is conflicting data about the effect of NAD cofactors on activity. PubMed:11441146 suggests that the redox state of the cell can modulate the transcriptional activity of the CLOCK-BMAL1 heterodimer; NADH and NADPH enhance the DNA-binding activity of the heterodimer. PubMed:23229515 reports that NADH and NADPH have no significant effect on DNA-binding activity of the CLOCK-BMAL1 heterodimer. Functionally, transcriptional activator which forms a core component of the circadian clock. The circadian clock, an internal time-keeping system, regulates various physiological processes through the generation of approximately 24 hour circadian rhythms in gene expression, which are translated into rhythms in metabolism and behavior. It is derived from the Latin roots 'circa' (about) and 'diem' (day) and acts as an important regulator of a wide array of physiological functions including metabolism, sleep, body temperature, blood pressure, endocrine, immune, cardiovascular, and renal function. Consists of two major components: the central clock, residing in the suprachiasmatic nucleus (SCN) of the brain, and the peripheral clocks that are present in nearly every tissue and organ system. Both the central and peripheral clocks can be reset by environmental cues, also known as Zeitgebers (German for 'timegivers'). The predominant Zeitgeber for the central clock is light, which is sensed by retina and signals directly to the SCN. The central clock entrains the peripheral clocks through neuronal and hormonal signals, body temperature and feeding-related cues, aligning all clocks with the external light/dark cycle. Circadian rhythms allow an organism to achieve temporal homeostasis with its environment at the molecular level by regulating gene expression to create a peak of protein expression once every 24 hours to control when a particular physiological process is most active with respect to the solar day. Transcription and translation of core clock components (CLOCK, NPAS2, BMAL1, BMAL2, PER1, PER2, PER3, CRY1 and CRY2) plays a critical role in rhythm generation, whereas delays imposed by post-translational modifications (PTMs) are important for determining the period (tau) of the rhythms (tau refers to the period of a rhythm and is the length, in time, of one complete cycle). A diurnal rhythm is synchronized with the day/night cycle, while the ultradian and infradian rhythms have a period shorter and longer than 24 hours, respectively. Disruptions in the circadian rhythms contribute to the pathology of cardiovascular diseases, cancer, metabolic syndromes and aging. A transcription/translation feedback loop (TTFL) forms the core of the molecular circadian clock mechanism. Transcription factors, CLOCK or NPAS2 and BMAL1 or BMAL2, form the positive limb of the feedback loop, act in the form of a heterodimer and activate the transcription of core clock genes and clock-controlled genes (involved in key metabolic processes), harboring E-box elements (5'-CACGTG-3') within their promoters. The core clock genes: PER1/2/3 and CRY1/2 which are transcriptional repressors form the negative limb of the feedback loop and interact with the CLOCK|NPAS2-BMAL1|BMAL2 heterodimer inhibiting its activity and thereby negatively regulating their own expression. This heterodimer also activates nuclear receptors NR1D1/2 and RORA/B/G, which form a second feedback loop and which activate and repress BMAL1 transcription, respectively. BMAL1 positively regulates myogenesis and negatively regulates adipogenesis via the transcriptional control of the genes of the canonical Wnt signaling pathway. Plays a role in normal pancreatic beta-cell function; regulates glucose-stimulated insulin secretion via the regulation of antioxidant genes NFE2L2/NRF2 and its targets SESN2, PRDX3, CCLC and CCLM. Negatively regulates the mTORC1 signaling pathway; regulates the expression of MTOR and DEPTOR. Controls diurnal oscillations of Ly6C inflammatory monocytes; rhythmic recruitment of the PRC2 complex imparts diurnal variation to chemokine expression that is necessary to sustain Ly6C monocyte rhythms. Regulates the expression of HSD3B2, STAR, PTGS2, CYP11A1, CYP19A1 and LHCGR in the ovary and also the genes involved in hair growth. Plays an important role in adult hippocampal neurogenesis by regulating the timely entry of neural stem/progenitor cells (NSPCs) into the cell cycle and the number of cell divisions that take place prior to cell-cycle exit. Regulates the circadian expression of CIART and KLF11. The CLOCK-BMAL1 heterodimer regulates the circadian expression of SERPINE1/PAI1, VWF, B3, CCRN4L/NOC, NAMPT, DBP, MYOD1, PPARGC1A, PPARGC1B, SIRT1, GYS2, F7, NGFR, GNRHR, BHLHE40/DEC1, ATF4, MTA1, KLF10 and also genes implicated in glucose and lipid metabolism. Promotes rhythmic chromatin opening, regulating the DNA accessibility of other transcription factors. The NPAS2-BMAL1 heterodimer positively regulates the expression of MAOA, F7 and LDHA and modulates the circadian rhythm of daytime contrast sensitivity by regulating the rhythmic expression of adenylate cyclase type 1 (ADCY1) in the retina. The preferred binding motif for the CLOCK-BMAL1 heterodimer is 5'-CACGTGA-3', which contains a flanking adenine nucleotide at the 3-prime end of the canonical 6-nucleotide E-box sequence. CLOCK specifically binds to the half-site 5'-CAC-3', while BMAL1 binds to the half-site 5'-GTGA-3'. The CLOCK-BMAL1 heterodimer also recognizes the non-canonical E-box motifs 5'-AACGTGA-3' and 5'-CATGTGA-3'. Essential for the rhythmic interaction of CLOCK with ASS1 and plays a critical role in positively regulating CLOCK-mediated acetylation of ASS1. Plays a role in protecting against lethal sepsis by limiting the expression of immune checkpoint protein CD274 in macrophages in a PKM2-dependent manner. Regulates the diurnal rhythms of skeletal muscle metabolism via transcriptional activation of genes promoting triglyceride synthesis (DGAT2) and metabolic efficiency (COQ10B). In terms of biological role, (Microbial infection) Regulates SARS coronavirus-2/SARS-CoV-2 entry and replication in lung epithelial cells probably through the post-transcriptional regulation of ACE2 and interferon-stimulated gene expression. This is Basic helix-loop-helix ARNT-like protein 1 from Homo sapiens (Human).